A 322-amino-acid polypeptide reads, in one-letter code: Ribose 1,5-bisphosphate isomerase (322 aa).

Substrate-binding positions include 20 to 23 and Arg63; that span reads RGAG. Cys133 functions as the Proton acceptor in the catalytic mechanism. A substrate-binding site is contributed by 135–137; that stretch reads SKA. Asp202 serves as the catalytic Proton donor. Substrate contacts are provided by residues 212 to 213 and Lys238; that span reads NK.

This sequence belongs to the eIF-2B alpha/beta/delta subunits family. R15P isomerase subfamily. Homohexamer; trimer of dimers.

The catalysed reaction is alpha-D-ribose 1,5-bisphosphate = D-ribulose 1,5-bisphosphate. With respect to regulation, is highly activated in the presence of AMP, with an increase of &gt;40-fold in activity levels. Among other nucleotides, isomerase activity is slightly increased in the presence of GMP, but CMP, UMP, TMP, and NAD(+) have no effect; therefore, AMP is likely the major activator of R15P isomerase in vivo. To a lesser extent, various compounds with an adenosyl moiety, such as dAMP, adenosine, or methylthioadenosine, can also act as activators. The regulation of this enzyme by AMP prevents excess degradation of intracellular AMP by the archaeal AMP degradation pathway. Functionally, catalyzes the isomerization of ribose 1,5-bisphosphate (R15P) to ribulose 1,5-bisphosphate (RuBP), the CO(2) acceptor and substrate for RubisCO. Only accepts the alpha-anomer of D-ribose 1,5-bisphosphate as substrate, being inactive on the beta-anomer. Displays a strict substrate specificity, since other phosphorylated sugars such as R5P, ribose, G16P, G6P, G1P, FBP, F6P, and PRPP, are not substrates. Functions in an archaeal AMP degradation pathway, together with AMP phosphorylase and RubisCO. This chain is Ribose 1,5-bisphosphate isomerase, found in Thermococcus kodakarensis (strain ATCC BAA-918 / JCM 12380 / KOD1) (Pyrococcus kodakaraensis (strain KOD1)).